The chain runs to 201 residues: CASP-like protein 1F2 (201 aa).

The Cytoplasmic segment spans residues 1–29 (MITSIATTTAGAFEVKSLGFIPYPSQPKR). Residues 30–50 (IFFMAQVIFRILAIAFAVASI) form a helical membrane-spanning segment. The Extracellular segment spans residues 51-78 (SAMVTSDQNVIVFGMDTAARYSYSSAFR). The helical transmembrane segment at 79 to 99 (FLVGANAVVCGFSVLSLIFVC) threads the bilayer. The Cytoplasmic segment spans residues 100–119 (LMSRRSEAILEKNYYLFLHD). Residues 120–140 (MVMMVMMVSGCSAATAIGYVG) form a helical membrane-spanning segment. Topologically, residues 141–162 (RYGEKEITWTAVCDFVGKFCNQ) are extracellular. Residues 163–183 (ALVSIVLAYLALFCYVALTTL) form a helical membrane-spanning segment. Topologically, residues 184-201 (AAHKLNHSSSTAAIRQNE) are cytoplasmic.

The protein belongs to the Casparian strip membrane proteins (CASP) family. In terms of assembly, homodimer and heterodimers.

Its subcellular location is the cell membrane. The sequence is that of CASP-like protein 1F2 from Ricinus communis (Castor bean).